The primary structure comprises 370 residues: Psilocybin cluster transcription regulator (370 aa).

2 disordered regions span residues 1–39 and 102–221; these read MAPT…ADIS and YQTG…RRRR. A compositionally biased stretch (polar residues) spans 143-152; that stretch reads IQHQDQQQSG. Residues 183 to 202 show a composition bias toward low complexity; that stretch reads TSTSTPSGGRRGGRSATMGS. Residues 204-218 show a composition bias toward basic and acidic residues; that stretch reads EWSRQRKDNHKEVER. The basic motif stretch occupies residues 208–221; it reads QRKDNHKEVERRRR. In terms of domain architecture, bHLH spans 208–258; it reads QRKDNHKEVERRRRGNINEGINELGRIVPSGSGEKAKGAILSRAVQYIHHL. Positions 222 to 258 are helix-loop-helix motif; it reads GNINEGINELGRIVPSGSGEKAKGAILSRAVQYIHHL. The tract at residues 317–370 is disordered; sequence VSTAGAGSGAAKDESAAGTKRRSTDGADAAGTNVEGGNNDNAEGERDGKRQRTE. Residues 359 to 370 are compositionally biased toward basic and acidic residues; that stretch reads EGERDGKRQRTE.

The protein localises to the nucleus. In terms of biological role, transcription factor that may regulate the expression of the gene cluster that mediates the biosynthesis of psilocybin, a psychotropic tryptamine-derived natural product. This Psilocybe cyanescens protein is Psilocybin cluster transcription regulator.